Reading from the N-terminus, the 702-residue chain is MEGFLTDQQREMMKVATQTADDLPPSQKPHSVLLEHLPKPSGGGKASGASNAVKHRRSHAGRSIRSKKDGGGGKGNWGKLIDTDGDYHIDPNDPNYDSGEEPFELVGATLSDPLDDYKKAAASIINEYFSTGDVDVAAADLIELGSSEYHPYFIKRLVSVAMDRHDKEKEMASVLLSALYADVINPNQIRDGFVLLLESADDFVVDIPDAVNVLALFLARAVVDDILPPAFLPRAAKALPITSKGYQVVQTAEKSYLSAAHHAELVERRWGGQTRTTVEEVKKKIADILNEYVETGETYEACRCVRELGVSFFHHEVVKRALVTALENHAAEAPVLKLLNEAASENLISSSQMVKGFSRLRESLDDLALDIPSARTKFGLIVPKAVSGGWLDASFGYPSGECGRQQNEDEKLKRFKEDIVTIIHEYFNSDDIPELIRSLEDLGAPEYNPIFLKKLITLALDRKNHEKEMASVLLSSLHIEMFTTEDVADGFVMLLESAEDTALDILDASNELALFLARAVIDDVLAPFNLEEISSKLRPNSSGTETVKMARSLIFARHAGERLLRCWGGGSGWAVEDAKDKISNLLEEYESSGLVSEACKCIHELGMPFFNHEVVKKALVMGMEKKKDKMMLDLLQESFSEGLITTNQMTKGFTRVKDGLEDLALDIPNAKEKFNDYVEYGKKNGWVSSSFLTSLTEDANVG.

The interval 1-100 (MEGFLTDQQR…PNDPNYDSGE (100 aa)) is disordered. Residues 53-65 (VKHRRSHAGRSIR) are compositionally biased toward basic residues. Residues 81-91 (IDTDGDYHIDP) are compositionally biased toward basic and acidic residues. Residues 116–237 (DYKKAAASII…PPAFLPRAAK (122 aa)) enclose the MI 1 domain. The short motif at 267–274 (ERRWGGQT) is the Nuclear localization signal 1 element. 3 MI domains span residues 280–401 (EVKK…PSGE), 414–535 (RFKE…EISS), and 577–697 (DAKD…SLTE). The short motif at 615–622 (VKKALVMG) is the Nuclear localization signal 2 element.

This sequence belongs to the PDCD4 family. As to quaternary structure, interacts with EIN2, ETR2 and EIN4. Binds to EIF4A1. The association with ribosomes is modulated by cellular energy status and TOR activity. As to expression, mostly expressed in vegetative tissues, such as leaves and stems, and, to a lower extent, in roots and reproductive tissues, such as flower buds and flowers. Expressed in seedlings, roots, cauline leaf tips and flowers.

It localises to the nucleus. Its subcellular location is the cytoplasm. It is found in the cytosol. Involved in target of rapamycin (TOR)-regulated translation control, especially under energy-deficient conditions. Involved in the regulation of the ethylene-mediated signaling pathway. Involved in salt stress responses. Reduced cotyledons size and early flowering. In Arabidopsis thaliana (Mouse-ear cress), this protein is MA3 DOMAIN-CONTAINING TRANSLATION REGULATORY FACTOR 3.